The sequence spans 483 residues: O-acetyltransferase pboB (483 aa).

It belongs to the fumigaclavine B O-acetyltransferase family. As to quaternary structure, monomer.

It functions in the pathway secondary metabolite biosynthesis. O-acetyltransferase; part of the gene cluster that mediates the biosynthesis of protubonine B, a hydroxylated and diacetylated cyclo-L-Trp-L-Leu derivative. Within the pathway, pboB catalyzes the acetylation of protubonine C at N-1 of the indoline ring to produce protubonine B. The first step of the protubonine B synthesis is performed by the nonribosomal peptide synthetase pboA that catalyzes the formation of cyclo-L-Trp-L-Leu by condensing L-Leu with L-Trp. The flavin-dependent monooxygenase pboD is responsible for hydroxylation at C-3 of the indole ring and subsequent formation of the pyrrolidine ring, leadind to protubonine D. Protubonine D is further diacetylated by two acetyltransferases, pboB and pboC, to form the final product protubonine B via protubonine C. The protein is O-acetyltransferase pboB of Aspergillus ustus.